A 315-amino-acid chain; its full sequence is Methionyl-tRNA formyltransferase (315 aa).

113–116 provides a ligand contact to (6S)-5,6,7,8-tetrahydrofolate; sequence SLLP.

This sequence belongs to the Fmt family.

The enzyme catalyses L-methionyl-tRNA(fMet) + (6R)-10-formyltetrahydrofolate = N-formyl-L-methionyl-tRNA(fMet) + (6S)-5,6,7,8-tetrahydrofolate + H(+). Its function is as follows. Attaches a formyl group to the free amino group of methionyl-tRNA(fMet). The formyl group appears to play a dual role in the initiator identity of N-formylmethionyl-tRNA by promoting its recognition by IF2 and preventing the misappropriation of this tRNA by the elongation apparatus. This Escherichia coli (strain SE11) protein is Methionyl-tRNA formyltransferase.